The chain runs to 709 residues: Leucine-rich repeat-containing protein 4B (709 aa).

An N-terminal signal peptide occupies residues 1 to 38; sequence MAQAHIQGSPCPLLPPGRMSWPQGALLLLWLFSPPLRA. Residues 50 to 88 enclose the LRRNT domain; that stretch reads GGGSPPATSCPAACSCSNQASRVICTRRELAEVPASIPV. LRR repeat units lie at residues 89–110, 113–134, 137–158, 161–182, 185–207, 210–231, 232–253, 256–277, and 280–301; these read NTRY…TFKH, HLEI…AFNG, SLNT…AFEY, KLRE…AFNR, SLRR…AFEG, NLRY…TALV, RLEE…SFQG, SLRK…AFDD, and SLEE…LFTP. The LRRCT domain occupies 313-365; that stretch reads NPWHCNCDVLWLSWWLKETVPSNTTCCARCHAPAGLKGRYIGELDQSHFTCYA. The region spanning 366-454 is the Ig-like C2-type domain; sequence PVIVEPPTDL…GNTTASATLN (89 aa). N-linked (GlcNAc...) asparagine glycans are attached at residues Asn376, Asn402, Asn424, Asn427, and Asn446. Cys387 and Cys438 form a disulfide bridge. Positions 496–552 are disordered; it reads TQPGEEAQQPRGTEKEPPGPTTDGAWGGGRPDAAAPASASTTAPAPRSSRPTEKAFT. A compositionally biased stretch (low complexity) spans 528–544; it reads AAAPASASTTAPAPRSS. The helical transmembrane segment at 575–595 threads the bilayer; sequence IIIGCFVAITFMAAVMLVAFY. The residue at position 689 (Ser689) is a Phosphoserine.

As to quaternary structure, interacts with PTPRF. Interacts with DLG4. In terms of processing, N-glycosylated. O-glycosylated; contains sialic acid. In terms of tissue distribution, mainly expressed in the brain. Widespread distribution in various brain regions (at protein level). Detected both embryonically and postnatally with stronger expression in postnatal stages.

The protein resides in the membrane. Its subcellular location is the presynaptic cell membrane. Functionally, synaptic adhesion protein. Regulates the formation of excitatory synapses. The trans-synaptic adhesion between LRRC4B and PTPRF regulates the formation of excitatory synapses in a bidirectional manner. This chain is Leucine-rich repeat-containing protein 4B (Lrrc4b), found in Rattus norvegicus (Rat).